The following is a 135-amino-acid chain: Fluoride-specific ion channel FluC (135 aa).

4 helical membrane passes run 12 to 32 (FLVI…LGLS), 42 to 62 (LGTL…VGIF), 70 to 90 (LAWK…FSTF), and 106 to 126 (AIGL…LGLL). Na(+) contacts are provided by glycine 82 and threonine 85.

Belongs to the fluoride channel Fluc/FEX (TC 1.A.43) family.

It is found in the cell inner membrane. The catalysed reaction is fluoride(in) = fluoride(out). Its activity is regulated as follows. Na(+) is not transported, but it plays an essential structural role and its presence is essential for fluoride channel function. Its function is as follows. Fluoride-specific ion channel. Important for reducing fluoride concentration in the cell, thus reducing its toxicity. The sequence is that of Fluoride-specific ion channel FluC from Dechloromonas aromatica (strain RCB).